The primary structure comprises 232 residues: Orotidine 5'-phosphate decarboxylase (232 aa).

Residues D11, K33, 60–69 (DLKFHDIPNT), T120, R181, Q190, G210, and R211 contribute to the substrate site. K62 acts as the Proton donor in catalysis.

The protein belongs to the OMP decarboxylase family. Type 1 subfamily. In terms of assembly, homodimer.

The enzyme catalyses orotidine 5'-phosphate + H(+) = UMP + CO2. It participates in pyrimidine metabolism; UMP biosynthesis via de novo pathway; UMP from orotate: step 2/2. Its function is as follows. Catalyzes the decarboxylation of orotidine 5'-monophosphate (OMP) to uridine 5'-monophosphate (UMP). The protein is Orotidine 5'-phosphate decarboxylase of Vibrio vulnificus (strain YJ016).